Consider the following 43-residue polypeptide: Cytochrome b559 subunit beta (43 aa).

The helical transmembrane segment at 18–34 (WLAVHGLAIPTVFFLGG) threads the bilayer. Residue histidine 22 coordinates heme.

The protein belongs to the PsbE/PsbF family. In terms of assembly, heterodimer of an alpha subunit and a beta subunit. PSII is composed of 1 copy each of membrane proteins PsbA, PsbB, PsbC, PsbD, PsbE, PsbF, PsbH, PsbI, PsbJ, PsbK, PsbL, PsbM, PsbT, PsbX, PsbY, PsbZ, Psb30/Ycf12, at least 3 peripheral proteins of the oxygen-evolving complex and a large number of cofactors. It forms dimeric complexes. Requires heme b as cofactor.

The protein resides in the plastid. It is found in the chloroplast thylakoid membrane. Its function is as follows. This b-type cytochrome is tightly associated with the reaction center of photosystem II (PSII). PSII is a light-driven water:plastoquinone oxidoreductase that uses light energy to abstract electrons from H(2)O, generating O(2) and a proton gradient subsequently used for ATP formation. It consists of a core antenna complex that captures photons, and an electron transfer chain that converts photonic excitation into a charge separation. The polypeptide is Cytochrome b559 subunit beta (Thalassiosira pseudonana (Marine diatom)).